Here is a 292-residue protein sequence, read N- to C-terminus: Probable alpha-L-glutamate ligase (292 aa).

The ATP-grasp domain occupies 104–287; the sequence is HQLLAAKGID…VATRIIEHVE (184 aa). ATP is bound by residues lysine 141, 178–179, aspartate 187, and 211–213; these read EF and RSN. Residues aspartate 248, glutamate 260, and asparagine 262 each contribute to the Mg(2+) site. The Mn(2+) site is built by aspartate 248, glutamate 260, and asparagine 262.

This sequence belongs to the RimK family. It depends on Mg(2+) as a cofactor. Mn(2+) is required as a cofactor.

The sequence is that of Probable alpha-L-glutamate ligase from Stenotrophomonas maltophilia (strain R551-3).